The following is a 255-amino-acid chain: MNINKIALIYNHNSKHLAIIEEIKKLYNYCKIEEAEVIIVIGGDGELLHNIHRYMHLNIPFYGVNLGSLGFLMNPLDTKKLLQNIHDSTVSILNPLLMQVADTNGQIYTALAINEVSIFRKTNQAAKFRIEVNGIERMNELVADGALVATPAGSSAYNLSASGPILPLESNMLCLTPICSFRPRRWHGALLLSSATIKFEILNTNKRPVNATADFQEFNNITNVTVKSTKDKPVKLLFNKNHTLEDRIIKEQFGG.

The active-site Proton acceptor is D44. Residues 44 to 45 (DG), H49, 114 to 115 (NE), D144, A152, 155 to 160 (SAYNLS), and Q216 each bind NAD(+).

The protein belongs to the NAD kinase family. Requires a divalent metal cation as cofactor.

It is found in the cytoplasm. It carries out the reaction NAD(+) + ATP = ADP + NADP(+) + H(+). In terms of biological role, involved in the regulation of the intracellular balance of NAD and NADP, and is a key enzyme in the biosynthesis of NADP. Catalyzes specifically the phosphorylation on 2'-hydroxyl of the adenosine moiety of NAD to yield NADP. This is NAD kinase from Rickettsia rickettsii (strain Iowa).